We begin with the raw amino-acid sequence, 232 residues long: Ubiquinone biosynthesis O-methyltransferase (232 aa).

Positions 36, 55, 76, and 120 each coordinate S-adenosyl-L-methionine.

The protein belongs to the methyltransferase superfamily. UbiG/COQ3 family.

The enzyme catalyses a 3-demethylubiquinol + S-adenosyl-L-methionine = a ubiquinol + S-adenosyl-L-homocysteine + H(+). It carries out the reaction a 3-(all-trans-polyprenyl)benzene-1,2-diol + S-adenosyl-L-methionine = a 2-methoxy-6-(all-trans-polyprenyl)phenol + S-adenosyl-L-homocysteine + H(+). It functions in the pathway cofactor biosynthesis; ubiquinone biosynthesis. O-methyltransferase that catalyzes the 2 O-methylation steps in the ubiquinone biosynthetic pathway. The chain is Ubiquinone biosynthesis O-methyltransferase from Burkholderia lata (strain ATCC 17760 / DSM 23089 / LMG 22485 / NCIMB 9086 / R18194 / 383).